Consider the following 688-residue polypeptide: Polyphosphate kinase (688 aa).

N45 contributes to the ATP binding site. Mg(2+) contacts are provided by R375 and R405. The region spanning 430–464 (PGLKIHAKLFLISRKENGEVVRYAHIGTGNFNEKT) is the PLD phosphodiesterase domain. The active-site Phosphohistidine intermediate is the H435. 3 residues coordinate ATP: Y468, R564, and H592.

The protein belongs to the polyphosphate kinase 1 (PPK1) family. The cofactor is Mg(2+). An intermediate of this reaction is the autophosphorylated ppk in which a phosphate is covalently linked to a histidine residue through a N-P bond.

The catalysed reaction is [phosphate](n) + ATP = [phosphate](n+1) + ADP. Its function is as follows. Catalyzes the reversible transfer of the terminal phosphate of ATP to form a long-chain polyphosphate (polyP). The chain is Polyphosphate kinase from Escherichia coli O6:H1 (strain CFT073 / ATCC 700928 / UPEC).